The primary structure comprises 209 residues: uncharacterized protein (209 aa).

Residues serine 119 and histidine 160 each act as charge relay system in the active site.

Belongs to the peptidase S51 family.

This is an uncharacterized protein from Listeria innocua serovar 6a (strain ATCC BAA-680 / CLIP 11262).